The following is a 191-amino-acid chain: Ion-translocating oxidoreductase complex subunit B (191 aa).

Residues Met-1–Ala-26 form a hydrophobic region. The 4Fe-4S domain maps to Glu-32 to Val-90. [4Fe-4S] cluster-binding residues include Cys-49, Cys-52, Cys-57, Cys-73, Cys-114, Cys-117, Cys-120, Cys-124, Cys-144, Cys-147, Cys-150, and Cys-154. 4Fe-4S ferredoxin-type domains lie at Met-105–Arg-134 and Gln-135–Val-164.

The protein belongs to the 4Fe4S bacterial-type ferredoxin family. RnfB subfamily. The complex is composed of six subunits: RnfA, RnfB, RnfC, RnfD, RnfE and RnfG. [4Fe-4S] cluster serves as cofactor.

It is found in the cell inner membrane. Its function is as follows. Part of a membrane-bound complex that couples electron transfer with translocation of ions across the membrane. This is Ion-translocating oxidoreductase complex subunit B from Ectopseudomonas mendocina (strain ymp) (Pseudomonas mendocina).